Consider the following 933-residue polypeptide: Clumping factor A (933 aa).

The first 39 residues, 1–39 (MNMKKKEKHAIRKKSIGVASVLVGTLIGFGLLSSKEADA), serve as a signal peptide directing secretion. Positions 9 to 20 (HAIRKKSIGVAS) match the YSIRK-G/S signaling motif motif. Disordered regions lie at residues 34–200 (SKEA…SNKD) and 529–904 (FNNG…SEDE). Residues 40–542 (SENSVTQSDS…SGSGDGIDKP (503 aa)) form a ligand binding A region region. Low complexity predominate over residues 47 to 65 (SDSASNESKSNDSSSVSAA). Over residues 71-105 (TNVSDTKTSSNTNNGETSVAQNPAQQETTQSSSTN) the composition is skewed to polar residues. The span at 106–132 (ATTEETPVTGEATTTTTNQANTPATTQ) shows a compositional bias: low complexity. The segment covering 133-200 (SSNTNAEELV…PQSTDASNKD (68 aa)) has biased composition (polar residues). Positions 547–565 (QPDEPGEIEPIPEDSDSDP) are enriched in acidic residues. Over residues 566–598 (GSDSGSDSNSDSGSDSGSDSTSDSGSDSASDSD) the composition is skewed to low complexity. A compositionally biased stretch (acidic residues) spans 599–861 (SASDSDSASD…DSDSESDSNS (263 aa)). Residues 862–880 (DSESGSNNNVVPPNSPKNG) are compositionally biased toward low complexity. Basic and acidic residues predominate over residues 887-896 (NEAKDSKEPL). Residues 896 to 900 (LPDTG) carry the LPXTG sorting signal motif. Threonine 899 carries the post-translational modification Pentaglycyl murein peptidoglycan amidated threonine. The propeptide at 900–933 (GSEDEANTSLIWGLLASIGSLLLFRRKKENKDKK) is removed by sortase.

The protein belongs to the serine-aspartate repeat-containing protein (SDr) family.

It is found in the secreted. The protein localises to the cell wall. Its function is as follows. Cell surface-associated protein implicated in virulence. Promotes bacterial attachment exclusively to the gamma-chain of human fibrinogen. Induces formation of bacterial clumps, which diminish the ability of group IIA phospholipase A2 to cause bacterial phospholipid hydrolysis and killing. Significantly decreases macrophage phagocytosis possibly thanks to the clumps, clumped bacteria being too large to be phagocytosed. Dominant factor responsible for human platelet aggregation, which may be an important mechanism for initiating infective endocarditis. Enhances spleen cell proliferative response in vitro, contributing significantly to the immunostimulatory activity of S.aureus. This chain is Clumping factor A (clfA), found in Staphylococcus aureus (strain Newman).